Here is a 213-residue protein sequence, read N- to C-terminus: MKTSIAIVDYGMGNLRSVAQALMKAEPAADVKIVDRPEAIRAADRVVLPGQGAMPDCMRCLGESGLQEAVVEASRTKPLLGVCVGEQMLFDWSAEGDTKGLGLLPGKVVRFALEGRLQDDGSRFKVPQMGWNRVRQTQAHPLWDGVPDDAYFYFVHSYYVVPDNPAHTAGETLYGDVFTSAVARDNLFATQFHPEKSAEVGLRLYRNFVHWNP.

Residues 4-213 (SIAIVDYGMG…LYRNFVHWNP (210 aa)) enclose the Glutamine amidotransferase type-1 domain. Residue C83 is the Nucleophile of the active site. Residues H193 and E195 contribute to the active site.

As to quaternary structure, heterodimer of HisH and HisF.

The protein localises to the cytoplasm. It catalyses the reaction 5-[(5-phospho-1-deoxy-D-ribulos-1-ylimino)methylamino]-1-(5-phospho-beta-D-ribosyl)imidazole-4-carboxamide + L-glutamine = D-erythro-1-(imidazol-4-yl)glycerol 3-phosphate + 5-amino-1-(5-phospho-beta-D-ribosyl)imidazole-4-carboxamide + L-glutamate + H(+). The enzyme catalyses L-glutamine + H2O = L-glutamate + NH4(+). It functions in the pathway amino-acid biosynthesis; L-histidine biosynthesis; L-histidine from 5-phospho-alpha-D-ribose 1-diphosphate: step 5/9. IGPS catalyzes the conversion of PRFAR and glutamine to IGP, AICAR and glutamate. The HisH subunit catalyzes the hydrolysis of glutamine to glutamate and ammonia as part of the synthesis of IGP and AICAR. The resulting ammonia molecule is channeled to the active site of HisF. The polypeptide is Imidazole glycerol phosphate synthase subunit HisH (Burkholderia pseudomallei (strain K96243)).